The chain runs to 1387 residues: Regulator of G-protein signaling 12 (1387 aa).

The region spanning serine 21–glycine 97 is the PDZ domain. Residues serine 171 and serine 194 each carry the phosphoserine modification. Lysine 195 is covalently cross-linked (Glycyl lysine isopeptide (Lys-Gly) (interchain with G-Cter in SUMO2)). The region spanning valine 227–phenylalanine 339 is the PID domain. Disordered regions lie at residues alanine 409–phenylalanine 428 and leucine 442–threonine 488. Residues histidine 412–phenylalanine 428 show a composition bias toward polar residues. 2 positions are modified to omega-N-methylarginine: arginine 524 and arginine 633. Residues arginine 620–phenylalanine 650 form a disordered region. A phosphoserine mark is found at serine 661 and serine 671. The 118-residue stretch at serine 715–valine 832 folds into the RGS domain. The interval proline 842–serine 934 is disordered. The span at serine 849 to lysine 869 shows a compositional bias: low complexity. Phosphoserine is present on residues serine 850 and serine 879. A compositionally biased stretch (basic and acidic residues) spans aspartate 914 to leucine 923. Residue serine 943 is modified to Phosphoserine. RBD domains follow at residues lysine 962 to arginine 1032 and leucine 1034 to arginine 1104. Positions glutamate 1103–lysine 1117 are enriched in basic and acidic residues. The interval glutamate 1103–glutamate 1168 is disordered. Polar residues predominate over residues lysine 1122 to asparagine 1133. Positions isoleucine 1151–glutamate 1168 are enriched in basic and acidic residues. Residues alanine 1187 to leucine 1209 enclose the GoLoco domain. Disordered stretches follow at residues proline 1224–threonine 1325 and alanine 1349–phenylalanine 1387. Over residues serine 1261–proline 1280 the composition is skewed to low complexity. Positions serine 1315–threonine 1325 are enriched in polar residues. Positions leucine 1367 to threonine 1380 are enriched in pro residues.

As to quaternary structure, interacts with GNAI1, GNAI2 and GNAI3; the interactions are GDP-dependent. As to expression, detected in brain cortex GABAergic neurons, in striatum and substantia nigra, and in the Purkinje cell layer in the cerebellum and hippocampus (at protein level). Expressed at high levels in brain and lung and lower levels in testis, heart, and spleen.

It localises to the nucleus. The protein resides in the cytoplasm. The protein localises to the cell projection. It is found in the dendrite. Its subcellular location is the synapse. Functionally, regulates G protein-coupled receptor signaling cascades. Inhibits signal transduction by increasing the GTPase activity of G protein alpha subunits, thereby driving them into their inactive GDP-bound form. The chain is Regulator of G-protein signaling 12 (Rgs12) from Rattus norvegicus (Rat).